A 181-amino-acid polypeptide reads, in one-letter code: Protein Syd (181 aa).

The protein belongs to the Syd family.

The protein localises to the cell inner membrane. Functionally, interacts with the SecY protein in vivo. May bind preferentially to an uncomplexed state of SecY, thus functioning either as a chelating agent for excess SecY in the cell or as a regulatory factor that negatively controls the translocase function. This Shigella dysenteriae serotype 1 (strain Sd197) protein is Protein Syd.